A 393-amino-acid polypeptide reads, in one-letter code: NADH-quinone oxidoreductase subunit H 2 (393 aa).

10 helical membrane passes run 13-33, 79-99, 112-132, 158-178, 186-206, 240-260, 278-298, 309-329, 333-353, and 368-388; these read VLVT…IVLV, AIFW…FAVI, VGLL…ILGG, LAFA…QGIV, VWGI…YIIA, LYFL…VTLF, LNYG…FTLI, VLLG…IPMV, MIGL…MIWF, and IGWK…AVLG.

This sequence belongs to the complex I subunit 1 family. As to quaternary structure, NDH-1 is composed of 14 different subunits. Subunits NuoA, H, J, K, L, M, N constitute the membrane sector of the complex.

The protein localises to the cell inner membrane. The enzyme catalyses a quinone + NADH + 5 H(+)(in) = a quinol + NAD(+) + 4 H(+)(out). Functionally, NDH-1 shuttles electrons from NADH, via FMN and iron-sulfur (Fe-S) centers, to quinones in the respiratory chain. The immediate electron acceptor for the enzyme in this species is believed to be ubiquinone. Couples the redox reaction to proton translocation (for every two electrons transferred, four hydrogen ions are translocated across the cytoplasmic membrane), and thus conserves the redox energy in a proton gradient. This subunit may bind ubiquinone. The protein is NADH-quinone oxidoreductase subunit H 2 of Solibacter usitatus (strain Ellin6076).